A 69-amino-acid polypeptide reads, in one-letter code: Probable rubredoxin HupI (69 aa).

The Rubredoxin-like domain occupies 16 to 67 (VTRLECGICWTVYDPADGDDVAQIAPGTPFAALPEEWHCPNCDAPKSKFMAI). 4 residues coordinate Fe cation: C21, C24, C54, and C57.

The protein belongs to the rubredoxin family. Fe(3+) is required as a cofactor.

In terms of biological role, could be an electron transport intermediate in hydrogen oxidation. The sequence is that of Probable rubredoxin HupI (hupI) from Bradyrhizobium diazoefficiens (strain JCM 10833 / BCRC 13528 / IAM 13628 / NBRC 14792 / USDA 110).